The following is a 488-amino-acid chain: Receptor-like tyrosine-protein kinase kin-15 (488 aa).

Positions 1 to 26 are cleaved as a signal peptide; that stretch reads MCLKMRYERIKYILLFSLMHLVYSNS. The N-linked (GlcNAc...) asparagine glycan is linked to Asn25. The Extracellular portion of the chain corresponds to 27–50; that stretch reads TFESFTENPHISSQISNVLYMDQM. A helical membrane pass occupies residues 51–70; the sequence is FIIYILICILLILISVIVYL. Residues 71 to 488 lie on the Cytoplasmic side of the membrane; sequence SKRYSQQMMQ…SKLEDWIRRD (418 aa). Residues 144–458 form the Protein kinase domain; sequence EISEDKLGSG…VEFFEEHLSV (315 aa). Residues 150–158 and Lys183 each bind ATP; that span reads LGSGFFGEV. The Proton acceptor role is filled by Asp319.

It belongs to the protein kinase superfamily. Tyr protein kinase family. As to expression, hypodermal cells.

Its subcellular location is the cell membrane. The enzyme catalyses L-tyrosyl-[protein] + ATP = O-phospho-L-tyrosyl-[protein] + ADP + H(+). May be specifically involved in cell-cell interactions regulating cell fusions that generate the hypodermis during postembryonic development. It has a role in the development of the HYP7 hypodermal syncytium. The polypeptide is Receptor-like tyrosine-protein kinase kin-15 (kin-15) (Caenorhabditis elegans).